The primary structure comprises 211 residues: Thiamine-phosphate synthase (211 aa).

4-amino-2-methyl-5-(diphosphooxymethyl)pyrimidine contacts are provided by residues 41-45 (QYRDK) and N73. Residues D74 and D93 each contribute to the Mg(2+) site. T112 provides a ligand contact to 4-amino-2-methyl-5-(diphosphooxymethyl)pyrimidine. Position 139-141 (139-141 (SPT)) interacts with 2-[(2R,5Z)-2-carboxy-4-methylthiazol-5(2H)-ylidene]ethyl phosphate. Residue K142 coordinates 4-amino-2-methyl-5-(diphosphooxymethyl)pyrimidine. 2-[(2R,5Z)-2-carboxy-4-methylthiazol-5(2H)-ylidene]ethyl phosphate is bound by residues G169 and 189-190 (VS).

The protein belongs to the thiamine-phosphate synthase family. Mg(2+) is required as a cofactor.

The enzyme catalyses 2-[(2R,5Z)-2-carboxy-4-methylthiazol-5(2H)-ylidene]ethyl phosphate + 4-amino-2-methyl-5-(diphosphooxymethyl)pyrimidine + 2 H(+) = thiamine phosphate + CO2 + diphosphate. The catalysed reaction is 2-(2-carboxy-4-methylthiazol-5-yl)ethyl phosphate + 4-amino-2-methyl-5-(diphosphooxymethyl)pyrimidine + 2 H(+) = thiamine phosphate + CO2 + diphosphate. It carries out the reaction 4-methyl-5-(2-phosphooxyethyl)-thiazole + 4-amino-2-methyl-5-(diphosphooxymethyl)pyrimidine + H(+) = thiamine phosphate + diphosphate. It participates in cofactor biosynthesis; thiamine diphosphate biosynthesis; thiamine phosphate from 4-amino-2-methyl-5-diphosphomethylpyrimidine and 4-methyl-5-(2-phosphoethyl)-thiazole: step 1/1. Its function is as follows. Condenses 4-methyl-5-(beta-hydroxyethyl)thiazole monophosphate (THZ-P) and 2-methyl-4-amino-5-hydroxymethyl pyrimidine pyrophosphate (HMP-PP) to form thiamine monophosphate (TMP). The protein is Thiamine-phosphate synthase of Thioalkalivibrio sulfidiphilus (strain HL-EbGR7).